Reading from the N-terminus, the 873-residue chain is Bifunctional heparan sulfate N-deacetylase/N-sulfotransferase 3 (873 aa).

Residues 1-13 lie on the Cytoplasmic side of the membrane; the sequence is MSFIMKPHRHFQR. The chain crosses the membrane as a helical; Signal-anchor for type II membrane protein span at residues 14–34; that stretch reads TLILLATFCMVSIIISAYYLY. At 35–873 the chain is on the lumenal side; it reads SGYKQESEVS…WLRQELQKVR (839 aa). The interval 36–589 is heparan sulfate N-deacetylase 3; it reads GYKQESEVSG…KRHRDIWSKE (554 aa). Residues asparagine 146, asparagine 226, asparagine 342, and asparagine 392 are each glycosylated (N-linked (GlcNAc...) asparagine). The interval 590 to 873 is heparan sulfate N-sulfotransferase 3; it reads KTCDRLPKFL…WLRQELQKVR (284 aa). Lysine 605 serves as the catalytic For sulfotransferase activity. Residue 605–609 participates in 3'-phosphoadenylyl sulfate binding; that stretch reads KTGTT. An N-linked (GlcNAc...) asparagine glycan is attached at asparagine 658. Serine 703 is a binding site for 3'-phosphoadenylyl sulfate. A glycan (N-linked (GlcNAc...) asparagine) is linked at asparagine 794. Cysteine 809 and cysteine 819 form a disulfide bridge. Residue 824-828 participates in 3'-phosphoadenylyl sulfate binding; it reads KGRKY.

Belongs to the sulfotransferase 1 family. NDST subfamily. As to quaternary structure, monomer. As to expression, strongly expressed strongly in brain. Expressed at high level at embryonic day 11 compared to other stages of development. Weakly expressed in adult heart, kidney, muscle, endothelial cells and testis but not in other tissues.

The protein localises to the golgi apparatus membrane. The catalysed reaction is alpha-D-glucosaminyl-[heparan sulfate](n) + 3'-phosphoadenylyl sulfate = N-sulfo-alpha-D-glucosaminyl-[heparan sulfate](n) + adenosine 3',5'-bisphosphate + 2 H(+). It functions in the pathway glycan metabolism; heparan sulfate biosynthesis. Its pathway is glycan metabolism; heparin biosynthesis. In terms of biological role, essential bifunctional enzyme that catalyzes both the N-deacetylation and the N-sulfation of glucosamine (GlcNAc) of the glycosaminoglycan in heparan sulfate. Modifies the GlcNAc-GlcA disaccharide repeating sugar backbone to make N-sulfated heparosan, a prerequisite substrate for later modifications in heparin biosynthesis. Has high deacetylase activity but low sulfotransferase activity. The chain is Bifunctional heparan sulfate N-deacetylase/N-sulfotransferase 3 (Ndst3) from Mus musculus (Mouse).